A 733-amino-acid polypeptide reads, in one-letter code: Serine/threonine-protein kinase ATG1c (733 aa).

One can recognise a Protein kinase domain in the interval 12-269 (YLVGRQIGSG…FEEFFNHPFL (258 aa)). Residues 18–26 (IGSGSFSVV) and K41 each bind ATP. D134 functions as the Proton acceptor in the catalytic mechanism. Disordered stretches follow at residues 292–363 (SSGS…ELTS) and 379–414 (FETQ…SQDS). The span at 329–339 (KKTSSMKSSSG) shows a compositional bias: polar residues. Composition is skewed to basic and acidic residues over residues 342 to 360 (VDTR…KHTE) and 379 to 393 (FETQ…RREP). The AIM (Atg8-family-interacting motif) motif lies at 419 to 422 (FVLV). Disordered regions lie at residues 565–596 (GSPS…SHDG) and 713–733 (HRRS…NRQS). Residues 566 to 577 (SPSQDINKLRSS) are compositionally biased toward polar residues. A compositionally biased stretch (basic and acidic residues) spans 579 to 596 (LKHDTHSSNKVTDLSHDG). Over residues 717 to 733 (SAGQMQGSSLAMMNRQS) the composition is skewed to polar residues.

It belongs to the protein kinase superfamily. Ser/Thr protein kinase family.

It localises to the cytoplasmic vesicle. The protein resides in the autophagosome. Its function is as follows. Serine/threonine protein kinase involved in autophagy. The ATG1-ATG13 protein kinase complex regulates downstream events required for autophagosome enclosure and/or vacuolar delivery. The chain is Serine/threonine-protein kinase ATG1c from Arabidopsis thaliana (Mouse-ear cress).